We begin with the raw amino-acid sequence, 1102 residues long: DNA-directed RNA polymerase subunit beta (1102 aa).

The tract at residues 1081–1102 (LPGKRTPSRPIYESLSTEGNQD) is disordered.

Belongs to the RNA polymerase beta chain family. In cyanobacteria the RNAP catalytic core is composed of 2 alpha, 1 beta, 1 beta', 1 gamma and 1 omega subunit. When a sigma factor is associated with the core the holoenzyme is formed, which can initiate transcription.

The enzyme catalyses RNA(n) + a ribonucleoside 5'-triphosphate = RNA(n+1) + diphosphate. DNA-dependent RNA polymerase catalyzes the transcription of DNA into RNA using the four ribonucleoside triphosphates as substrates. In Trichodesmium erythraeum (strain IMS101), this protein is DNA-directed RNA polymerase subunit beta.